The chain runs to 174 residues: Balbiani ring protein 1 (174 aa).

A disordered region spans residues 28 to 174 (KCRCTSAGKP…RPEGCGSAMR (147 aa)). Repeat copies occupy residues 42-52 (EPSKGSKPRPE), 53-63 (KPSKGSKPRPE), 64-74 (KPSKGSKPKPE), 75-85 (KPSKGSKPRPE), 124-134 (EPSKGSKPRPE), 135-145 (KPSKESKPRPE), 146-156 (KPSKGSKPRPE), and 157-167 (KPSKGSKPRPE). 4 X 11 AA tandem repeats regions lie at residues 42–85 (EPSK…PRPE) and 124–167 (EPSK…PRPE). 2 stretches are compositionally biased toward basic and acidic residues: residues 49–100 (PRPE…EKCA) and 121–159 (RKSE…EKPS).

In terms of tissue distribution, salivary gland.

The protein localises to the secreted. In terms of biological role, used by the larvae to construct a supramolecular structure, the larval tube. In Chironomus tentans (Midge), this protein is Balbiani ring protein 1 (BR1).